The following is a 359-amino-acid chain: Transcription factor bHLH130 (359 aa).

A Phosphoserine modification is found at Ser-60. The tract at residues 161 to 186 (EEDEESPSNSNGLRRHCSLSSRPPSS) is disordered. The segment covering 167–184 (PSNSNGLRRHCSLSSRPP) has biased composition (polar residues). The bHLH domain maps to 285–335 (CATHPRSIAERVRRTRISERMRKLQELVPNMDKQTNTSDMLDLAVDYIKDL).

As to quaternary structure, homodimer.

It localises to the nucleus. The sequence is that of Transcription factor bHLH130 (BHLH130) from Arabidopsis thaliana (Mouse-ear cress).